The sequence spans 365 residues: Transcription factor TCP2 (365 aa).

Residues 42-100 (GKDRHSKVLTSKGPRDRRVRLSVSTALQFYDLQDRLGYDQPSKAVEWLIKAAEDSISEL) form the TCP domain. Residues 130–150 (KSACSSNSDTSKNSSGLSLSR) are compositionally biased toward low complexity. 2 disordered regions span residues 130 to 202 (KSAC…SAPS) and 220 to 245 (QTHF…HPHH). Residues 151-172 (SELRDKARERARERTAKETKER) enclose the R domain. The segment covering 151–176 (SELRDKARERARERTAKETKERDHNH) has biased composition (basic and acidic residues). Residues 177–202 (TSFTDLLNSGSDPVNSNRQWMASAPS) show a composition bias toward polar residues.

In terms of assembly, interacts with SPL. Interacts with CRY1. Expressed in cotyledons, particularly in the vascular region, in leaves, roots, buds, flowers and immature siliques.

Its subcellular location is the nucleus. Its function is as follows. Plays a pivotal role in the control of morphogenesis of shoot organs by negatively regulating the expression of boundary-specific genes such as CUC genes, probably through the induction of miRNA (e.g. miR164). Participates in ovule development. Promotes light-regulated transcription of CHS, CAB, HYH and HY5. Positively regulates photomorphogenesis (e.g. hypocotyl elongation inhibition and cotyledon opening in response to blue light). The protein is Transcription factor TCP2 of Arabidopsis thaliana (Mouse-ear cress).